A 370-amino-acid polypeptide reads, in one-letter code: Alanine racemase (370 aa).

Lys-36 acts as the Proton acceptor; specific for D-alanine in catalysis. Lys-36 is modified (N6-(pyridoxal phosphate)lysine). Residue Arg-134 coordinates substrate. The Proton acceptor; specific for L-alanine role is filled by Tyr-265. Met-313 contributes to the substrate binding site.

This sequence belongs to the alanine racemase family. Pyridoxal 5'-phosphate is required as a cofactor.

The catalysed reaction is L-alanine = D-alanine. It functions in the pathway amino-acid biosynthesis; D-alanine biosynthesis; D-alanine from L-alanine: step 1/1. Functionally, catalyzes the interconversion of L-alanine and D-alanine. May also act on other amino acids. This Desulforamulus reducens (strain ATCC BAA-1160 / DSM 100696 / MI-1) (Desulfotomaculum reducens) protein is Alanine racemase (alr).